The primary structure comprises 331 residues: Inner membrane ABC transporter permease protein YjfF (331 aa).

The Cytoplasmic segment spans residues 1–5; sequence MIKRN. Residues 6–26 traverse the membrane as a helical segment; that stretch reads LPLMITIGVFVLGYLYCLTQF. Topologically, residues 27-42 are periplasmic; sequence PGFASTRVICNILTDN. The chain crosses the membrane as a helical span at residues 43-63; sequence AFLGIIAVGMTFVILSGGIDL. The Cytoplasmic segment spans residues 64-88; sequence SVGSVIAFTGVFLAKVIGDFGLSPL. The chain crosses the membrane as a helical span at residues 89–109; that stretch reads LAFPLVLVMGCAFGAFMGLLI. The Periplasmic portion of the chain corresponds to 110–113; sequence DALK. A helical transmembrane segment spans residues 114–134; the sequence is IPAFIITLAGMFFLRGVSYLV. Residues 135–159 are Cytoplasmic-facing; that stretch reads SEESIPINHPIYDTLSSLAWKIPGG. Residues 160–180 form a helical membrane-spanning segment; sequence GRLSAMGLLMLAVVVIGIFLA. Over 181-222 the chain is Periplasmic; it reads HRTRFGNQVYAIGGNATSANLMGISTRSTTIRIYMLSTGLAT. The helical transmembrane segment at 223 to 243 threads the bilayer; it reads LAGIVFSIYTQAGYALAGVGV. At 244 to 250 the chain is on the cytoplasmic side; the sequence is ELDAIAS. The helical transmembrane segment at 251-271 threads the bilayer; that stretch reads VVIGGTLLSGGVGTVLGTLFG. Topologically, residues 272 to 294 are periplasmic; the sequence is VAIQGLIQTYINFDGTLSSWWTK. A helical transmembrane segment spans residues 295–315; sequence IAIGILLFIFIALQRGLTVLW. The Cytoplasmic segment spans residues 316-331; that stretch reads ENRQSSPVTRVNIAQQ.

It belongs to the binding-protein-dependent transport system permease family. AraH/RbsC subfamily. In terms of assembly, the complex is composed of two ATP-binding proteins (YtfR), two transmembrane proteins (YtfT and YjfF) and a solute-binding protein (YtfQ).

It is found in the cell inner membrane. Functionally, part of the ABC transporter complex YtfQRT-YjfF involved in galactofuranose transport. Probably responsible for the translocation of the substrate across the membrane. This Escherichia coli (strain K12) protein is Inner membrane ABC transporter permease protein YjfF (yjfF).